Reading from the N-terminus, the 641-residue chain is DNA primase (641 aa).

Residues 41–65 (CPFHDEKSPSFQVSPSKGFFHCFGC) form a CHC2-type zinc finger. In terms of domain architecture, Toprim spans 262-346 (SRAVVVEGYT…AAETYIAIAP (85 aa)). 3 residues coordinate Mg(2+): glutamate 268, aspartate 317, and aspartate 319. Residues 444 to 478 (RDRGGKGPAPDQRQRGGGPQQQAGPMTATPRGPAL) are disordered.

It belongs to the DnaG primase family. In terms of assembly, monomer. Interacts with DnaB. Zn(2+) is required as a cofactor. Mg(2+) serves as cofactor.

It carries out the reaction ssDNA + n NTP = ssDNA/pppN(pN)n-1 hybrid + (n-1) diphosphate.. RNA polymerase that catalyzes the synthesis of short RNA molecules used as primers for DNA polymerase during DNA replication. The sequence is that of DNA primase from Streptomyces coelicolor (strain ATCC BAA-471 / A3(2) / M145).